The sequence spans 188 residues: GMP synthase [glutamine-hydrolyzing] subunit A (188 aa).

One can recognise a Glutamine amidotransferase type-1 domain in the interval 1-188 (MIVILNNGGQ…FCKVCGLLGE (188 aa)). The Nucleophile role is filled by cysteine 76. Residues histidine 163 and glutamate 165 contribute to the active site.

Heterodimer composed of a glutamine amidotransferase subunit (A) and a GMP-binding subunit (B).

The catalysed reaction is XMP + L-glutamine + ATP + H2O = GMP + L-glutamate + AMP + diphosphate + 2 H(+). The protein operates within purine metabolism; GMP biosynthesis; GMP from XMP (L-Gln route): step 1/1. In terms of biological role, catalyzes the synthesis of GMP from XMP. This is GMP synthase [glutamine-hydrolyzing] subunit A from Methanococcus aeolicus (strain ATCC BAA-1280 / DSM 17508 / OCM 812 / Nankai-3).